A 276-amino-acid chain; its full sequence is S-adenosylmethionine decarboxylase proenzyme (276 aa).

Serine 126 functions as the Schiff-base intermediate with substrate; via pyruvic acid in the catalytic mechanism. Position 126 is a pyruvic acid (Ser); by autocatalysis (serine 126). Histidine 131 (proton acceptor; for processing activity) is an active-site residue. The active-site Proton donor; for catalytic activity is the cysteine 154.

This sequence belongs to the prokaryotic AdoMetDC family. Type 2 subfamily. In terms of assembly, heterooctamer of four alpha and four beta chains arranged as a tetramer of alpha/beta heterodimers. Pyruvate is required as a cofactor. In terms of processing, is synthesized initially as an inactive proenzyme. Formation of the active enzyme involves a self-maturation process in which the active site pyruvoyl group is generated from an internal serine residue via an autocatalytic post-translational modification. Two non-identical subunits are generated from the proenzyme in this reaction, and the pyruvate is formed at the N-terminus of the alpha chain, which is derived from the carboxyl end of the proenzyme. The post-translation cleavage follows an unusual pathway, termed non-hydrolytic serinolysis, in which the side chain hydroxyl group of the serine supplies its oxygen atom to form the C-terminus of the beta chain, while the remainder of the serine residue undergoes an oxidative deamination to produce ammonia and the pyruvoyl group blocking the N-terminus of the alpha chain.

The catalysed reaction is S-adenosyl-L-methionine + H(+) = S-adenosyl 3-(methylsulfanyl)propylamine + CO2. Its pathway is amine and polyamine biosynthesis; S-adenosylmethioninamine biosynthesis; S-adenosylmethioninamine from S-adenosyl-L-methionine: step 1/1. In terms of biological role, catalyzes the decarboxylation of S-adenosylmethionine to S-adenosylmethioninamine (dcAdoMet), the propylamine donor required for the synthesis of the polyamines spermine and spermidine from the diamine putrescine. The protein is S-adenosylmethionine decarboxylase proenzyme of Alcanivorax borkumensis (strain ATCC 700651 / DSM 11573 / NCIMB 13689 / SK2).